The following is a 471-amino-acid chain: Cysteine--tRNA ligase (471 aa).

Cys-29 is a binding site for Zn(2+). The short motif at 31 to 41 (PTVYNYIHIGN) is the 'HIGH' region element. Zn(2+) is bound by residues Cys-209, His-234, and Glu-238. A 'KMSKS' region motif is present at residues 266 to 270 (KMSKS). Lys-269 contributes to the ATP binding site.

Belongs to the class-I aminoacyl-tRNA synthetase family. In terms of assembly, monomer. The cofactor is Zn(2+).

The protein resides in the cytoplasm. It carries out the reaction tRNA(Cys) + L-cysteine + ATP = L-cysteinyl-tRNA(Cys) + AMP + diphosphate. The polypeptide is Cysteine--tRNA ligase (Listeria monocytogenes serotype 4b (strain CLIP80459)).